Consider the following 293-residue polypeptide: Sec-independent protein translocase protein TatC (293 aa).

Helical transmembrane passes span 35-55 (AAIATIIAAIIGTVFLYQPFI), 87-107 (LLKVGMYIGLVIASPVWLYQA), 123-143 (LFGFLTASIFAFACGVAISYF), 173-193 (ILKFVVTFSCAFIIPVILVGI), 204-224 (ILKSWRWVVVLVAVIAALTAP), and 228-248 (IMMMFVLMAPLLIFFFAAIGI).

The protein belongs to the TatC family. The Tat system comprises two distinct complexes: a TatABC complex, containing multiple copies of TatA, TatB and TatC subunits, and a separate TatA complex, containing only TatA subunits. Substrates initially bind to the TatABC complex, which probably triggers association of the separate TatA complex to form the active translocon.

Its subcellular location is the cell membrane. Its function is as follows. Part of the twin-arginine translocation (Tat) system that transports large folded proteins containing a characteristic twin-arginine motif in their signal peptide across membranes. Together with TatB, TatC is part of a receptor directly interacting with Tat signal peptides. The sequence is that of Sec-independent protein translocase protein TatC from Rothia mucilaginosa (strain DY-18) (Stomatococcus mucilaginosus).